Here is a 361-residue protein sequence, read N- to C-terminus: MSNLPEAKLDVLLAHHASLEAQLLGEVAANDYVRITRELSELNPLVEAVKAYREVRDELGDIDDLLEDPATDPEMRAMAEAERDALDAHREDLIQQIRVALLPKDAMDERNVMLEIRAGTGGDEASLFAGDLFRMYEKFAALQGWSVEVISASEGTVGGFKEIIAEVKGRGAFAKLKFESGVHRVQRVPDTETQGRIHTSAATVAVLPEVEEVDVDIKPDDLKIDTMRAQGAGGQHVNKTESAIRITHLPTGIVVMMQDSRSQHKNRASAMNILRSRIYDAEQQRIDSARSAERKQKVGSGDRSERIRTYNFPQGRVTDHRINLTLYKLPQVIAGEALGELIDALTTEHQVAQLAAQGHAA.

An N5-methylglutamine modification is found at Q235. The interval 286–305 (IDSARSAERKQKVGSGDRSE) is disordered.

This sequence belongs to the prokaryotic/mitochondrial release factor family. In terms of processing, methylated by PrmC. Methylation increases the termination efficiency of RF1.

The protein localises to the cytoplasm. Functionally, peptide chain release factor 1 directs the termination of translation in response to the peptide chain termination codons UAG and UAA. This Rhodopseudomonas palustris (strain HaA2) protein is Peptide chain release factor 1.